The primary structure comprises 257 residues: THAP domain-containing protein 10 (257 aa).

Residues 1-90 (MPARCVAAHC…LVAGAVPTLH (90 aa)) form a THAP-type zinc finger. Positions 154–168 (QPHADNPSNTVTSVP) are enriched in polar residues. A disordered region spans residues 154-178 (QPHADNPSNTVTSVPTHCEEGPVHK).

The chain is THAP domain-containing protein 10 (THAP10) from Homo sapiens (Human).